Consider the following 485-residue polypeptide: WD repeat-containing protein 13 (485 aa).

Methionine 1 carries the post-translational modification N-acetylmethionine. Phosphoserine is present on residues serine 70, serine 74, and serine 79. An Asymmetric dimethylarginine; alternate modification is found at arginine 114. Arginine 114 carries the post-translational modification Omega-N-methylarginine; alternate. WD repeat units follow at residues 162 to 202 (GMYH…LCQL), 208 to 246 (TVLR…IWAS), 250 to 290 (RCIR…VMNI), 295 to 335 (KVKG…LFDM), 341 to 389 (TKAK…VVDN), 394 to 438 (QLKR…FFDV), and 444 to 482 (AAVN…VWRR).

Widely expressed.

It localises to the nucleus. In Homo sapiens (Human), this protein is WD repeat-containing protein 13 (WDR13).